Consider the following 466-residue polypeptide: MATEGDKLLGGRFVGSVDPIMEILSSSISTEQRLTEVDIQASMAYAKALEKASILTKTELEKILSGLEKISEESSKGVLVMTQSDEDIQTAIERRLKELIGDIAGKLQTGRSRNEQVVTDLKLLLKSSISVISTHLLQLIKTLVERAAIEIDIIMPGYTHLQKALPIRWSQFLLSHAVALTRDSERLGEVKKRITVLPLGSGVLAGNPLEIDRELLRSELDMTSITLNSIDAISERDFVVELISVATLLMIHLSKLAEDLIIFSTTEFGFVTLSDAYSTGSSLLPQKKNPDSLELIRSKAGRVFGRLAAILMVLKGIPSTFSKDLQEDKEAVLDVVDTLTAVLQVATGVISTLQINKENMEKALTPELLSTDLALYLVRKGMPIRQAQTASGKAVHLAETKGITINNLTLEDLKSISPLFASDVSQVFSVVNSVEQYTAVGGTAKSSVTAQIEQLRELLKKQKEQA.

It belongs to the lyase 1 family. Argininosuccinate lyase subfamily. In terms of assembly, homotetramer. As to expression, eye lens.

In terms of biological role, delta crystallin, the principal crystallin in embryonic lens, is found only in birds and reptiles. The sequence is that of Delta-1 crystallin (ASL1) from Meleagris gallopavo (Wild turkey).